Consider the following 581-residue polypeptide: Colicin-E2 (581 aa).

Disordered stretches follow at residues 1–74 (MSGG…SGGG), 242–269 (QTLSPGVTNNTDKDVRPAGFTQGGNTRD), 293–320 (PDQVKQRQDEENRRQQEWDATHPVEAAE), 421–488 (ADAA…IADK), and 513–566 (DLSK…MNNI). The span at 20–35 (INGGPTGLGVGGGASD) shows a compositional bias: gly residues. Positions 36–45 (GSGWSSENNP) are enriched in low complexity. Residues 46–74 (WGGGSGSGIHWGGGSGHGNGGGNGNSGGG) are compositionally biased toward gly residues. A compositionally biased stretch (polar residues) spans 242 to 251 (QTLSPGVTNN). Composition is skewed to basic and acidic residues over residues 296 to 320 (VKQRQDEENRRQQEWDATHPVEAAE), 429 to 452 (QERRKQKENKEKDAKDKLDKESKR), and 464 to 475 (PVGDKWLDDAGK). The span at 518–527 (FKGSNKTNIQ) shows a compositional bias: polar residues. Residues 535-554 (RKKDQVGGRERFELHHDKPI) are compositionally biased toward basic and acidic residues. Zn(2+)-binding residues include H549, H574, and H578.

It belongs to the colicin/pyosin nuclease family.

This plasmid-coded bactericidal protein is an endonuclease active on both single- and double-stranded DNA but with undefined specificity. Its function is as follows. Colicins are polypeptide toxins produced by and active against E.coli and closely related bacteria. This Escherichia coli protein is Colicin-E2 (col).